The sequence spans 521 residues: Cysteine protease atg-4.2 (521 aa).

A compositionally biased stretch (low complexity) spans 90–100 (MMGSIRPSSSS). The disordered stretch occupies residues 90–109 (MMGSIRPSSSSQDVHSTGEI). Cysteine 203 serves as the catalytic Nucleophile. Catalysis depends on residues aspartate 394 and histidine 396. Positions 499 to 521 (PSYEREVSETEQAQADKHGFEML) are disordered.

This sequence belongs to the peptidase C54 family.

The protein localises to the cytoplasm. It carries out the reaction [protein]-C-terminal L-amino acid-glycyl-phosphatidylethanolamide + H2O = [protein]-C-terminal L-amino acid-glycine + a 1,2-diacyl-sn-glycero-3-phosphoethanolamine. In terms of biological role, cysteine protease required for autophagy. Cleaves the C-terminal amino acid of ATG8 family proteins lgg-1, to reveal a C-terminal glycine. Exposure of the glycine at the C-terminus is essential for ATG8 proteins conjugation to phosphatidylethanolamine (PE) and insertion to membranes, which is necessary for autophagy. Its cleavage activity is functionally redundant to atg-4.1, but it cleaves lgg-1 precursors less efficiently than atg-4.1. In contrast to atg-4.1, plays a more significant role in the later phases of autophagy and in addition has a role in autophagosome maturation. Acts redundantly with atg-4.1 to promote the lgg-1 delipidation to release the protein from membranes, which facilitates multiple events during macroautophagy. Regulates the accumulation of autophagic structures in neurons and is specifically, required for the maturation and elimination of autophagosomes from the synaptic region of AIY interneurons. This chain is Cysteine protease atg-4.2, found in Caenorhabditis elegans.